The primary structure comprises 149 residues: D-aminoacyl-tRNA deacylase (149 aa).

The short motif at 137–138 (GP) is the Gly-cisPro motif, important for rejection of L-amino acids element.

The protein belongs to the DTD family. Homodimer.

It localises to the cytoplasm. The enzyme catalyses glycyl-tRNA(Ala) + H2O = tRNA(Ala) + glycine + H(+). The catalysed reaction is a D-aminoacyl-tRNA + H2O = a tRNA + a D-alpha-amino acid + H(+). An aminoacyl-tRNA editing enzyme that deacylates mischarged D-aminoacyl-tRNAs. Also deacylates mischarged glycyl-tRNA(Ala), protecting cells against glycine mischarging by AlaRS. Acts via tRNA-based rather than protein-based catalysis; rejects L-amino acids rather than detecting D-amino acids in the active site. By recycling D-aminoacyl-tRNA to D-amino acids and free tRNA molecules, this enzyme counteracts the toxicity associated with the formation of D-aminoacyl-tRNA entities in vivo and helps enforce protein L-homochirality. This is D-aminoacyl-tRNA deacylase from Clostridium botulinum (strain 657 / Type Ba4).